We begin with the raw amino-acid sequence, 261 residues long: Gap junction beta-6 protein (261 aa).

The Cytoplasmic portion of the chain corresponds to 1–22 (MDWGTLHTFIGGVNKHSTSIGK). The helical transmembrane segment at 23 to 45 (VWITVIFIFRVMILVVAAQEVWG) threads the bilayer. At 46–75 (DEQEDFVCNTLQPGCKNVCYDHFFPVSHIR) the chain is on the extracellular side. The helical transmembrane segment at 76–98 (LWALQLIFVSTPALLVAMHVAYY) threads the bilayer. At 99–131 (RHETTRKFRRGEKRNDFKDIEDIKKQKVRIEGS) the chain is on the cytoplasmic side. A helical membrane pass occupies residues 132–154 (LWWTYTSSIFFRIIFEAAFMYVF). Over 155 to 192 (YFLYNGYHLPWVLKCGIDPCPNLVDCFISRPTEKTVFT) the chain is Extracellular. Residues 193-215 (IFMISASVICMLLNVAELCYLLL) form a helical membrane-spanning segment. Residues 216 to 261 (KVCFRRSKRAQTQKNHPNHALKESKQNEMNELISDSGQNAITGFPS) are Cytoplasmic-facing.

It belongs to the connexin family. Beta-type (group I) subfamily. In terms of assembly, a connexon is composed of a hexamer of connexins. Interacts with CNST.

It is found in the cell membrane. Its subcellular location is the cell junction. The protein localises to the gap junction. Its function is as follows. One gap junction consists of a cluster of closely packed pairs of transmembrane channels, the connexons, through which materials of low MW diffuse from one cell to a neighboring cell. The polypeptide is Gap junction beta-6 protein (GJB6) (Homo sapiens (Human)).